A 388-amino-acid polypeptide reads, in one-letter code: Chalcone synthase (388 aa).

Residue cysteine 164 is part of the active site.

Belongs to the thiolase-like superfamily. Chalcone/stilbene synthases family.

The catalysed reaction is (E)-4-coumaroyl-CoA + 3 malonyl-CoA + 3 H(+) = 2',4,4',6'-tetrahydroxychalcone + 3 CO2 + 4 CoA. It participates in secondary metabolite biosynthesis; flavonoid biosynthesis. The primary product of this enzyme is 4,2',4',6'-tetrahydroxychalcone (also termed naringenin-chalcone or chalcone) which can under specific conditions spontaneously isomerize into naringenin. This chain is Chalcone synthase (CHS), found in Vigna unguiculata (Cowpea).